The chain runs to 446 residues: Transcription factor SOX-8 (446 aa).

Disordered stretches follow at residues 1 to 58 (MLDM…DPAE), 155 to 259 (AERL…RQNI), and 318 to 378 (HKSA…PFAG). Over residues 40 to 53 (EGLGRAGVAVGGAR) the composition is skewed to gly residues. The interval 58 to 100 (EAADERFPACIRDAVSQVLKGYDWSLVPMPVRGGGGGALKAKP) is dimerization (DIM). The HMG box DNA-binding region spans 102 to 170 (VKRPMNAFMV…QHKKDHPDYK (69 aa)). Composition is skewed to basic and acidic residues over residues 155–171 (AERL…DYKY), 210–219 (DGHHHGDHTG), and 242–253 (PELKLEGRRPVD). Positions 224–298 (PPTPPTTPKT…LPLGGPAPPE (75 aa)) are transactivation domain (TAM). The interval 335–446 (RPHIKTEQPS…QPVYTTLTRP (112 aa)) is transactivation domain (TAC). Residues 362–378 (SGQSSATPAAPAGPFAG) are compositionally biased toward low complexity. The 9aaTAD motif lies at 400–408 (PGLYQYPCF). A disordered region spans residues 425 to 446 (LPPAHSPTSHWDQPVYTTLTRP). Polar residues predominate over residues 430–446 (SPTSHWDQPVYTTLTRP).

It localises to the nucleus. Functionally, transcription factor that may play a role in central nervous system, limb and facial development. May be involved in male sex determination. Binds the consensus motif 5'-[AT][AT]CAA[AT]G-3'. The sequence is that of Transcription factor SOX-8 from Homo sapiens (Human).